The following is a 342-amino-acid chain: S-adenosylmethionine:tRNA ribosyltransferase-isomerase (342 aa).

This sequence belongs to the QueA family. As to quaternary structure, monomer.

Its subcellular location is the cytoplasm. It catalyses the reaction 7-aminomethyl-7-carbaguanosine(34) in tRNA + S-adenosyl-L-methionine = epoxyqueuosine(34) in tRNA + adenine + L-methionine + 2 H(+). The protein operates within tRNA modification; tRNA-queuosine biosynthesis. In terms of biological role, transfers and isomerizes the ribose moiety from AdoMet to the 7-aminomethyl group of 7-deazaguanine (preQ1-tRNA) to give epoxyqueuosine (oQ-tRNA). The protein is S-adenosylmethionine:tRNA ribosyltransferase-isomerase of Campylobacter jejuni (strain RM1221).